Reading from the N-terminus, the 82-residue chain is Small ribosomal subunit protein bS16 (82 aa).

The protein belongs to the bacterial ribosomal protein bS16 family.

This is Small ribosomal subunit protein bS16 from Methylobacillus flagellatus (strain ATCC 51484 / DSM 6875 / VKM B-1610 / KT).